A 250-amino-acid chain; its full sequence is 1-(5-phosphoribosyl)-5-[(5-phosphoribosylamino)methylideneamino] imidazole-4-carboxamide isomerase (250 aa).

D12 acts as the Proton acceptor in catalysis. The active-site Proton donor is D133.

It belongs to the HisA/HisF family.

Its subcellular location is the cytoplasm. It catalyses the reaction 1-(5-phospho-beta-D-ribosyl)-5-[(5-phospho-beta-D-ribosylamino)methylideneamino]imidazole-4-carboxamide = 5-[(5-phospho-1-deoxy-D-ribulos-1-ylimino)methylamino]-1-(5-phospho-beta-D-ribosyl)imidazole-4-carboxamide. The protein operates within amino-acid biosynthesis; L-histidine biosynthesis; L-histidine from 5-phospho-alpha-D-ribose 1-diphosphate: step 4/9. In Zymomonas mobilis subsp. mobilis (strain ATCC 31821 / ZM4 / CP4), this protein is 1-(5-phosphoribosyl)-5-[(5-phosphoribosylamino)methylideneamino] imidazole-4-carboxamide isomerase.